The following is a 232-amino-acid chain: tRNA (guanine-N(7)-)-methyltransferase (232 aa).

S-adenosyl-L-methionine contacts are provided by Glu63, Glu88, Asp115, and Asp137. The active site involves Asp137. Residues Lys141, Asp173, and 211–214 (TRYE) each bind substrate.

The protein belongs to the class I-like SAM-binding methyltransferase superfamily. TrmB family.

The enzyme catalyses guanosine(46) in tRNA + S-adenosyl-L-methionine = N(7)-methylguanosine(46) in tRNA + S-adenosyl-L-homocysteine. It functions in the pathway tRNA modification; N(7)-methylguanine-tRNA biosynthesis. Catalyzes the formation of N(7)-methylguanine at position 46 (m7G46) in tRNA. This chain is tRNA (guanine-N(7)-)-methyltransferase, found in Chelativorans sp. (strain BNC1).